Reading from the N-terminus, the 883-residue chain is Phosphoenolpyruvate carboxylase (883 aa).

Active-site residues include His138 and Lys546.

The protein belongs to the PEPCase type 1 family. Homotetramer. The cofactor is Mg(2+).

The enzyme catalyses oxaloacetate + phosphate = phosphoenolpyruvate + hydrogencarbonate. The enzyme has distinct binding sites for each of the allosteric effectors such as acetyl-CoA, fructose 1,6-bisphosphate, guanosine 3'-diphosphate 5'-diphosphate, long chain fatty acids, and L-aspartate. Functionally, forms oxaloacetate, a four-carbon dicarboxylic acid source for the tricarboxylic acid cycle. This Escherichia coli O157:H7 protein is Phosphoenolpyruvate carboxylase.